The chain runs to 126 residues: Small ribosomal subunit protein uS11 (126 aa).

The protein belongs to the universal ribosomal protein uS11 family. As to quaternary structure, part of the 30S ribosomal subunit.

In terms of biological role, located on the platform of the 30S subunit. This Methanosarcina acetivorans (strain ATCC 35395 / DSM 2834 / JCM 12185 / C2A) protein is Small ribosomal subunit protein uS11.